Consider the following 140-residue polypeptide: Large ribosomal subunit protein uL11 (140 aa).

The protein belongs to the universal ribosomal protein uL11 family. Part of the ribosomal stalk of the 50S ribosomal subunit. Interacts with L10 and the large rRNA to form the base of the stalk. L10 forms an elongated spine to which L12 dimers bind in a sequential fashion forming a multimeric L10(L12)X complex. In terms of processing, one or more lysine residues are methylated.

In terms of biological role, forms part of the ribosomal stalk which helps the ribosome interact with GTP-bound translation factors. This Dehalococcoides mccartyi (strain ATCC BAA-2100 / JCM 16839 / KCTC 5957 / BAV1) protein is Large ribosomal subunit protein uL11.